Consider the following 159-residue polypeptide: Eukaryotic translation initiation factor 5A-2 (159 aa).

Positions 1–10 (MSDEEHHFEP) are enriched in basic and acidic residues. The interval 1 to 21 (MSDEEHHFEPAADAGASKTYP) is disordered. At Lys-52 the chain carries Hypusine.

The protein belongs to the eIF-5A family. In terms of processing, lys-52 undergoes hypusination, a unique post-translational modification that consists in the addition of a butylamino group from spermidine to lysine side chain, leading to the formation of the unusual amino acid hypusine. eIF-5As are the only known proteins to undergo this modification, which is essential for their function.

Translation factor that promotes translation elongation and termination, particularly upon ribosome stalling at specific amino acid sequence contexts. Binds between the exit (E) and peptidyl (P) site of the ribosome and promotes rescue of stalled ribosome: specifically required for efficient translation of polyproline-containing peptides as well as other motifs that stall the ribosome. Acts as a ribosome quality control (RQC) cofactor by joining the RQC complex to facilitate peptidyl transfer during CAT tailing step. The chain is Eukaryotic translation initiation factor 5A-2 from Medicago sativa (Alfalfa).